The sequence spans 493 residues: MFKFALTLTLCLAGSLSLAQHNPHWWGNRNTIVHLFEWKWSDIAQECESFLGPRGFAGVQVSPVNENIISAGRPWWERYQPISYKLTTRSGNEEEFGDMVRRCNDVGVRIYVDVLLNHMSGDFDGVAVGTAGTEAEPRKKSFPGVPYTAQDFHPTCEITDWNDRFQVQQCELVGLKDLDQSSDWVRSKLIEFLDHLIELGVAGFRVDAAKHMASEDLEYIYSSLSNLNIDHGFPHNSRPFIFQEVIDHGHETVSRDEYKELGAVTEFRFSEEIGNAFRGNNALKWLQSWGTGWGFLPSGQALTFVDNHDNQRDAGAVLNYKSPKQYKMATAFHLAYPYGISRVMSSFAFDDHDTPPPQDAQERIISPEFDEDGACVNGWICEHRWRQIYAMVGFKNAVRDTEITGWWDNGDNQISFCRGNKGFLAINNNQYDLSQDLNTCLPTGTYCDVISGSLIDGSCTGKSVTVNENGYGYIHIGSDDFDGVLALHVDAKV.

Positions 1–19 are cleaved as a signal peptide; sequence MFKFALTLTLCLAGSLSLA. The residue at position 20 (Q20) is a Pyrrolidone carboxylic acid. A disulfide bridge links C47 with C103. Ca(2+) is bound by residues N117, Q168, and D177. A disulfide bridge connects residues C156 and C170. R205 serves as a coordination point for chloride. Catalysis depends on D207, which acts as the Nucleophile. H211 contributes to the Ca(2+) binding site. Catalysis depends on E244, which acts as the Proton donor. Residues N307 and R342 each coordinate chloride. Cystine bridges form between C375-C381, C417-C440, and C447-C459.

The protein belongs to the glycosyl hydrolase 13 family. Monomer. It depends on Ca(2+) as a cofactor. Chloride is required as a cofactor.

The protein localises to the secreted. It carries out the reaction Endohydrolysis of (1-&gt;4)-alpha-D-glucosidic linkages in polysaccharides containing three or more (1-&gt;4)-alpha-linked D-glucose units.. The sequence is that of Alpha-amylase-related protein (Amyrel) from Drosophila simulans (Fruit fly).